Consider the following 261-residue polypeptide: Cytochrome c oxidase subunit 3 (261 aa).

The Mitochondrial matrix portion of the chain corresponds to methionine 1–proline 15. The chain crosses the membrane as a helical span at residues tryptophan 16–tryptophan 34. Residues phenylalanine 35–proline 40 are Mitochondrial intermembrane-facing. The chain crosses the membrane as a helical span at residues serine 41 to threonine 66. Topologically, residues phenylalanine 67–threonine 72 are mitochondrial matrix. Residues proline 73 to serine 105 form a helical membrane-spanning segment. The Mitochondrial intermembrane portion of the chain corresponds to leucine 106–glutamate 128. The chain crosses the membrane as a helical span at residues valine 129–methionine 152. The Mitochondrial matrix segment spans residues glutamate 153–asparagine 155. Residues arginine 156–glutamate 183 form a helical membrane-spanning segment. At threonine 184–aspartate 190 the chain is on the mitochondrial intermembrane side. Residues glycine 191 to phenylalanine 223 traverse the membrane as a helical segment. Residues asparagine 224–histidine 232 lie on the Mitochondrial matrix side of the membrane. Residues phenylalanine 233–isoleucine 256 form a helical membrane-spanning segment. Over tyrosine 257–serine 261 the chain is Mitochondrial intermembrane.

It belongs to the cytochrome c oxidase subunit 3 family. Component of the cytochrome c oxidase (complex IV, CIV), a multisubunit enzyme composed of 14 subunits. The complex is composed of a catalytic core of 3 subunits MT-CO1, MT-CO2 and MT-CO3, encoded in the mitochondrial DNA, and 11 supernumerary subunits COX4I, COX5A, COX5B, COX6A, COX6B, COX6C, COX7A, COX7B, COX7C, COX8 and NDUFA4, which are encoded in the nuclear genome. The complex exists as a monomer or a dimer and forms supercomplexes (SCs) in the inner mitochondrial membrane with NADH-ubiquinone oxidoreductase (complex I, CI) and ubiquinol-cytochrome c oxidoreductase (cytochrome b-c1 complex, complex III, CIII), resulting in different assemblies (supercomplex SCI(1)III(2)IV(1) and megacomplex MCI(2)III(2)IV(2)).

The protein resides in the mitochondrion inner membrane. It carries out the reaction 4 Fe(II)-[cytochrome c] + O2 + 8 H(+)(in) = 4 Fe(III)-[cytochrome c] + 2 H2O + 4 H(+)(out). Its function is as follows. Component of the cytochrome c oxidase, the last enzyme in the mitochondrial electron transport chain which drives oxidative phosphorylation. The respiratory chain contains 3 multisubunit complexes succinate dehydrogenase (complex II, CII), ubiquinol-cytochrome c oxidoreductase (cytochrome b-c1 complex, complex III, CIII) and cytochrome c oxidase (complex IV, CIV), that cooperate to transfer electrons derived from NADH and succinate to molecular oxygen, creating an electrochemical gradient over the inner membrane that drives transmembrane transport and the ATP synthase. Cytochrome c oxidase is the component of the respiratory chain that catalyzes the reduction of oxygen to water. Electrons originating from reduced cytochrome c in the intermembrane space (IMS) are transferred via the dinuclear copper A center (CU(A)) of subunit 2 and heme A of subunit 1 to the active site in subunit 1, a binuclear center (BNC) formed by heme A3 and copper B (CU(B)). The BNC reduces molecular oxygen to 2 water molecules using 4 electrons from cytochrome c in the IMS and 4 protons from the mitochondrial matrix. This Oryctolagus cuniculus (Rabbit) protein is Cytochrome c oxidase subunit 3 (MT-CO3).